Consider the following 467-residue polypeptide: ATP-dependent protease ATPase subunit HslU (467 aa).

Residues V22 and 64–69 (GVGKTE) each bind ATP. The interval 149–192 (QTNNPLESLFGGAIPNFGQNNEDEEEPPTEEIKTKRSEIKRQLE) is disordered. Over residues 178–192 (EEIKTKRSEIKRQLE) the composition is skewed to basic and acidic residues. Positions 280, 345, and 417 each coordinate ATP.

It belongs to the ClpX chaperone family. HslU subfamily. A double ring-shaped homohexamer of HslV is capped on each side by a ring-shaped HslU homohexamer. The assembly of the HslU/HslV complex is dependent on binding of ATP.

Its subcellular location is the cytoplasm. Functionally, ATPase subunit of a proteasome-like degradation complex; this subunit has chaperone activity. The binding of ATP and its subsequent hydrolysis by HslU are essential for unfolding of protein substrates subsequently hydrolyzed by HslV. HslU recognizes the N-terminal part of its protein substrates and unfolds these before they are guided to HslV for hydrolysis. This Staphylococcus aureus (strain bovine RF122 / ET3-1) protein is ATP-dependent protease ATPase subunit HslU.